The sequence spans 342 residues: Small ribosomal subunit protein uS2 (342 aa).

Residues 235–283 form a disordered region; sequence EENAPFEQDEPRKPSQKPKQNRPENKPRFDKQAPRAAAKPEVKAEVKPE. Positions 255-283 are enriched in basic and acidic residues; sequence NRPENKPRFDKQAPRAAAKPEVKAEVKPE.

Belongs to the universal ribosomal protein uS2 family.

The chain is Small ribosomal subunit protein uS2 from Acholeplasma laidlawii (strain PG-8A).